Here is a 136-residue protein sequence, read N- to C-terminus: Large ribosomal subunit protein bL19 (136 aa).

Positions 1–23 (MEETVNNQETPETSEEETADEET) are disordered. A compositionally biased stretch (acidic residues) spans 12–23 (ETSEEETADEET).

It belongs to the bacterial ribosomal protein bL19 family.

Functionally, this protein is located at the 30S-50S ribosomal subunit interface and may play a role in the structure and function of the aminoacyl-tRNA binding site. The polypeptide is Large ribosomal subunit protein bL19 (Dehalococcoides mccartyi (strain ATCC BAA-2266 / KCTC 15142 / 195) (Dehalococcoides ethenogenes (strain 195))).